A 295-amino-acid chain; its full sequence is Phosphoribosylaminoimidazole-succinocarboxamide synthase (295 aa).

It belongs to the SAICAR synthetase family.

The enzyme catalyses 5-amino-1-(5-phospho-D-ribosyl)imidazole-4-carboxylate + L-aspartate + ATP = (2S)-2-[5-amino-1-(5-phospho-beta-D-ribosyl)imidazole-4-carboxamido]succinate + ADP + phosphate + 2 H(+). It functions in the pathway purine metabolism; IMP biosynthesis via de novo pathway; 5-amino-1-(5-phospho-D-ribosyl)imidazole-4-carboxamide from 5-amino-1-(5-phospho-D-ribosyl)imidazole-4-carboxylate: step 1/2. In Nitrosomonas europaea (strain ATCC 19718 / CIP 103999 / KCTC 2705 / NBRC 14298), this protein is Phosphoribosylaminoimidazole-succinocarboxamide synthase.